A 99-amino-acid chain; its full sequence is Acylphosphatase-1 (99 aa).

Ala-2 is modified (N-acetylalanine). Positions 9–99 (SVDYEVSGRV…LEHTDFQIRK (91 aa)) constitute an Acylphosphatase-like domain. Residues Arg-24 and Asn-42 contribute to the active site.

It belongs to the acylphosphatase family. In terms of tissue distribution, organ-common type isozyme is found in many different tissues.

It catalyses the reaction an acyl phosphate + H2O = a carboxylate + phosphate + H(+). This chain is Acylphosphatase-1 (ACYP1), found in Gallus gallus (Chicken).